The primary structure comprises 216 residues: Ion-translocating oxidoreductase complex subunit G (216 aa).

A helical transmembrane segment spans residues 14–34 (ALVLGSFGFLAASFVSIIYVI). FMN phosphoryl threonine is present on threonine 181.

The protein belongs to the RnfG family. The complex is composed of six subunits: RnfA, RnfB, RnfC, RnfD, RnfE and RnfG. Requires FMN as cofactor.

It is found in the cell inner membrane. In terms of biological role, part of a membrane-bound complex that couples electron transfer with translocation of ions across the membrane. This Buchnera aphidicola subsp. Baizongia pistaciae (strain Bp) protein is Ion-translocating oxidoreductase complex subunit G.